Here is a 178-residue protein sequence, read N- to C-terminus: Ribonuclease M5 (178 aa).

The Toprim domain occupies 10–103 (DGVIVCEGKT…NSTKIGVAEA (94 aa)). Residues Glu-16, Asp-62, and Asp-64 each coordinate Mg(2+).

Belongs to the ribonuclease M5 family. Mg(2+) serves as cofactor.

The protein resides in the cytoplasm. It catalyses the reaction Endonucleolytic cleavage of RNA, removing 21 and 42 nucleotides, respectively, from the 5'- and 3'-termini of a 5S-rRNA precursor.. Its function is as follows. Required for correct processing of both the 5' and 3' ends of 5S rRNA precursor. Cleaves both sides of a double-stranded region yielding mature 5S rRNA in one step. The chain is Ribonuclease M5 from Mycoplasma pneumoniae (strain ATCC 29342 / M129 / Subtype 1) (Mycoplasmoides pneumoniae).